The sequence spans 660 residues: Bifunctional polymyxin resistance protein ArnA (660 aa).

The interval 1–304 (MKAVIFAYHD…TLGLVAGARL (304 aa)) is formyltransferase ArnAFT. The Proton donor; for formyltransferase activity role is filled by His104. Residues Arg114 and 136-140 (VKRAD) contribute to the (6R)-10-formyltetrahydrofolate site. Residues 314-660 (RRIRVLILGV…RSVDVAERAS (347 aa)) are dehydrogenase ArnADH. NAD(+)-binding positions include Asp347 and 368–369 (DI). Residues Ala393, Tyr398, and 432 to 433 (TS) each bind UDP-alpha-D-glucuronate. Residue Glu434 is the Proton acceptor; for decarboxylase activity of the active site. UDP-alpha-D-glucuronate-binding positions include Arg460, Asn492, 526-535 (KLIDGGQQKR), and Tyr613. Arg619 functions as the Proton donor; for decarboxylase activity in the catalytic mechanism.

This sequence in the N-terminal section; belongs to the Fmt family. UDP-L-Ara4N formyltransferase subfamily. In the C-terminal section; belongs to the NAD(P)-dependent epimerase/dehydratase family. UDP-glucuronic acid decarboxylase subfamily. Homohexamer, formed by a dimer of trimers.

It carries out the reaction UDP-alpha-D-glucuronate + NAD(+) = UDP-beta-L-threo-pentopyranos-4-ulose + CO2 + NADH. It catalyses the reaction UDP-4-amino-4-deoxy-beta-L-arabinose + (6R)-10-formyltetrahydrofolate = UDP-4-deoxy-4-formamido-beta-L-arabinose + (6S)-5,6,7,8-tetrahydrofolate + H(+). The protein operates within nucleotide-sugar biosynthesis; UDP-4-deoxy-4-formamido-beta-L-arabinose biosynthesis; UDP-4-deoxy-4-formamido-beta-L-arabinose from UDP-alpha-D-glucuronate: step 1/3. It functions in the pathway nucleotide-sugar biosynthesis; UDP-4-deoxy-4-formamido-beta-L-arabinose biosynthesis; UDP-4-deoxy-4-formamido-beta-L-arabinose from UDP-alpha-D-glucuronate: step 3/3. It participates in bacterial outer membrane biogenesis; lipopolysaccharide biosynthesis. In terms of biological role, bifunctional enzyme that catalyzes the oxidative decarboxylation of UDP-glucuronic acid (UDP-GlcUA) to UDP-4-keto-arabinose (UDP-Ara4O) and the addition of a formyl group to UDP-4-amino-4-deoxy-L-arabinose (UDP-L-Ara4N) to form UDP-L-4-formamido-arabinose (UDP-L-Ara4FN). The modified arabinose is attached to lipid A and is required for resistance to polymyxin and cationic antimicrobial peptides. This Salmonella paratyphi B (strain ATCC BAA-1250 / SPB7) protein is Bifunctional polymyxin resistance protein ArnA.